Here is a 428-residue protein sequence, read N- to C-terminus: D-amino acid dehydrogenase (428 aa).

3–17 (VVILGSGVVGVASAY) is an FAD binding site.

It belongs to the DadA oxidoreductase family. FAD serves as cofactor.

The enzyme catalyses a D-alpha-amino acid + A + H2O = a 2-oxocarboxylate + AH2 + NH4(+). It functions in the pathway amino-acid degradation; D-alanine degradation; NH(3) and pyruvate from D-alanine: step 1/1. Oxidative deamination of D-amino acids. This chain is D-amino acid dehydrogenase, found in Burkholderia pseudomallei (strain K96243).